The chain runs to 185 residues: Endoribonuclease YbeY (185 aa).

Positions 135, 139, and 145 each coordinate Zn(2+).

This sequence belongs to the endoribonuclease YbeY family. Zn(2+) is required as a cofactor.

It is found in the cytoplasm. Single strand-specific metallo-endoribonuclease involved in late-stage 70S ribosome quality control and in maturation of the 3' terminus of the 16S rRNA. This is Endoribonuclease YbeY from Parasynechococcus marenigrum (strain WH8102).